Consider the following 201-residue polypeptide: ATP-dependent Clp protease proteolytic subunit (201 aa).

Ser100 acts as the Nucleophile in catalysis. His125 is a catalytic residue.

The protein belongs to the peptidase S14 family. In terms of assembly, component of the chloroplastic Clp protease core complex.

The protein resides in the plastid. It is found in the chloroplast stroma. It carries out the reaction Hydrolysis of proteins to small peptides in the presence of ATP and magnesium. alpha-casein is the usual test substrate. In the absence of ATP, only oligopeptides shorter than five residues are hydrolyzed (such as succinyl-Leu-Tyr-|-NHMec, and Leu-Tyr-Leu-|-Tyr-Trp, in which cleavage of the -Tyr-|-Leu- and -Tyr-|-Trp bonds also occurs).. Cleaves peptides in various proteins in a process that requires ATP hydrolysis. Has a chymotrypsin-like activity. Plays a major role in the degradation of misfolded proteins. The polypeptide is ATP-dependent Clp protease proteolytic subunit (Chloranthus spicatus (Chulantree)).